Consider the following 187-residue polypeptide: Dihydrofolate reductase (187 aa).

The region spanning 4 to 185 (PLNCIVAVSQ…IKYKFEVYEK (182 aa)) is the DHFR domain. NADP(+)-binding positions include Ala10 and 16–22 (GIGKNGD). 31-36 (EFQYFQ) contacts substrate. NADP(+) is bound at residue 55–57 (RKT). Arg71 lines the substrate pocket. Residues 77–79 (SRE) and 117–124 (GGSSVYKE) each bind NADP(+).

The protein belongs to the dihydrofolate reductase family. As to quaternary structure, homodimer.

Its subcellular location is the mitochondrion. It localises to the cytoplasm. The enzyme catalyses (6S)-5,6,7,8-tetrahydrofolate + NADP(+) = 7,8-dihydrofolate + NADPH + H(+). It functions in the pathway cofactor biosynthesis; tetrahydrofolate biosynthesis; 5,6,7,8-tetrahydrofolate from 7,8-dihydrofolate: step 1/1. Functionally, key enzyme in folate metabolism. Contributes to the de novo mitochondrial thymidylate biosynthesis pathway. Catalyzes an essential reaction for de novo glycine and purine synthesis, and for DNA precursor synthesis. Binds its own mRNA and that of DHFR2. This is Dihydrofolate reductase (DHFR) from Bos taurus (Bovine).